Reading from the N-terminus, the 465-residue chain is Glutamate--tRNA ligase 2 (465 aa).

The 'HIGH' region signature appears at 8-18; sequence PSPTGLMHLGN. A 'KMSKS' region motif is present at residues 249-253; sequence PLSKR. Lysine 252 is a binding site for ATP.

Belongs to the class-I aminoacyl-tRNA synthetase family. Glutamate--tRNA ligase type 1 subfamily. Monomer.

It localises to the cytoplasm. The enzyme catalyses tRNA(Glu) + L-glutamate + ATP = L-glutamyl-tRNA(Glu) + AMP + diphosphate. Catalyzes the attachment of glutamate to tRNA(Glu) in a two-step reaction: glutamate is first activated by ATP to form Glu-AMP and then transferred to the acceptor end of tRNA(Glu). This chain is Glutamate--tRNA ligase 2, found in Coxiella burnetii (strain CbuK_Q154) (Coxiella burnetii (strain Q154)).